The primary structure comprises 896 residues: Echinoderm microtubule-associated protein-like 3 (896 aa).

An N-acetylmethionine modification is found at Met1. Residues 16–43 are a coiled coil; the sequence is LQSLSQRLRVQEQEMELVKAALAEALRL. A disordered region spans residues 50–209; that stretch reads PSSLQGSGTP…GGPGSRRSNY (160 aa). A compositionally biased stretch (polar residues) spans 77-88; it reads TPSLVSRGTQTE. Residues 134–145 show a composition bias toward pro residues; that stretch reads PGPPGILRPLQP. Over residues 154–163 the composition is skewed to low complexity; it reads RNSSSSSSPS. Residues 174-189 are compositionally biased toward polar residues; it reads AISSANLLVRSGSTES. 3 positions are modified to phosphoserine: Ser176, Ser198, and Ser204. 13 WD repeats span residues 234-286, 295-344, 350-392, 398-434, 448-487, 504-543, 549-584, 589-626, 629-667, 674-709, 716-755, 765-823, and 830-869; these read RSLE…LYRP, GGGQ…IWDS, LQEI…VWDC, LAEI…FWNW, RKQG…TWGR, YGIV…QWGP, QEAE…LRGD, FSPV…LWDG, HALA…VLDT, SDVI…IYSV, SSRF…YWDV, RYES…LFQY, and APSR…QWRV. Residues 876 to 896 form a disordered region; that stretch reads GPAPATPSRTPSLSPASSLDV. A compositionally biased stretch (low complexity) spans 877-896; that stretch reads PAPATPSRTPSLSPASSLDV. Thr881 is modified (phosphothreonine; by CDK1). A Phosphoserine modification is found at Ser883.

The protein belongs to the WD repeat EMAP family. In terms of assembly, homotrimer; self-association is mediated by the N-terminal coiled coil. Interacts with EML2 but not with EML1. Interacts (phosphorylated at Thr-881) with TUBG1, HAUS1, HAUS2, HAUS3, HAUS4, HAUS5, HAUS6, HAUS7 and HAUS8. Phosphorylation at Thr-881 during mitosis is required for interaction with TUBG1, HAUS1, HAUS2, HAUS3, HAUS4, HAUS5, HAUS6, HAUS7 and HAUS8 and their recruitment to spindle microtubules.

It localises to the cytoplasm. The protein resides in the cytoskeleton. The protein localises to the nucleus. Its subcellular location is the midbody. It is found in the spindle. Its function is as follows. Regulates mitotic spindle assembly, microtubule (MT)-kinetochore attachment and chromosome separation via recruitment of HAUS augmin-like complex and TUBG1 to the existing MTs and promoting MT-based MT nucleation. Required for proper alignnment of chromosomes during metaphase. In Homo sapiens (Human), this protein is Echinoderm microtubule-associated protein-like 3 (EML3).